Consider the following 153-residue polypeptide: 6,7-dimethyl-8-ribityllumazine synthase (153 aa).

Residues Phe21, Ala55–Glu57, and Cys79–Ile81 contribute to the 5-amino-6-(D-ribitylamino)uracil site. Ala84–Thr85 serves as a coordination point for (2S)-2-hydroxy-3-oxobutyl phosphate. The active-site Proton donor is His87. Phe112 serves as a coordination point for 5-amino-6-(D-ribitylamino)uracil. Arg126 contributes to the (2S)-2-hydroxy-3-oxobutyl phosphate binding site.

It belongs to the DMRL synthase family. Forms an icosahedral capsid composed of 60 subunits, arranged as a dodecamer of pentamers.

The enzyme catalyses (2S)-2-hydroxy-3-oxobutyl phosphate + 5-amino-6-(D-ribitylamino)uracil = 6,7-dimethyl-8-(1-D-ribityl)lumazine + phosphate + 2 H2O + H(+). It participates in cofactor biosynthesis; riboflavin biosynthesis; riboflavin from 2-hydroxy-3-oxobutyl phosphate and 5-amino-6-(D-ribitylamino)uracil: step 1/2. Its function is as follows. Catalyzes the formation of 6,7-dimethyl-8-ribityllumazine by condensation of 5-amino-6-(D-ribitylamino)uracil with 3,4-dihydroxy-2-butanone 4-phosphate. This is the penultimate step in the biosynthesis of riboflavin. The chain is 6,7-dimethyl-8-ribityllumazine synthase from Staphylococcus epidermidis (strain ATCC 35984 / DSM 28319 / BCRC 17069 / CCUG 31568 / BM 3577 / RP62A).